A 388-amino-acid polypeptide reads, in one-letter code: uncharacterized protein (388 aa).

Positions 68–96 (KVDRMSEEEERMAIATRKAKEVAKELSET) form a coiled coil. Positions 162-388 (GSHPLVREFN…PPQQDWFDSV (227 aa)) are disordered. Basic and acidic residues-rich tracts occupy residues 166–176 (LVREFNGEKPP) and 196–208 (ATDKKTGSKQSDK). Basic residues predominate over residues 233–251 (GVKHQHAIRRDDRHRHGMR). Low complexity-rich tracts occupy residues 265–279 (QQQQCPVQGQQSRGQ) and 293–346 (QRRP…QRPA).

This is an uncharacterized protein from Frog virus 3 (isolate Goorha) (FV-3).